A 315-amino-acid polypeptide reads, in one-letter code: FGFR1 oncogene partner 2 homolog (315 aa).

Coiled-coil stretches lie at residues 32–99 (EEAE…RAME) and 156–183 (VVQR…ISKQ). Disordered regions lie at residues 201-222 (KAVQ…SGAS) and 238-315 (PEQP…APAT). Residues 246–269 (GTTNSFNTAPVHSQSETQAPSVTL) show a composition bias toward polar residues.

The protein belongs to the SIKE family.

This is FGFR1 oncogene partner 2 homolog from Drosophila melanogaster (Fruit fly).